The following is a 638-amino-acid chain: Nitrous-oxide reductase (638 aa).

The tat-type signal signal peptide spans Met1–Ala52. Residues His129, His130, and His178 each coordinate Cu cation. Ca(2+) contacts are provided by Tyr256, Glu259, Met267, Asp273, and Asn324. Cu cation is bound by residues His326, His382, and His433. Positions 454 and 469 each coordinate Ca(2+). The Cu cation site is built by His494, His583, Cys618, Trp620, Cys622, His626, and Met629. The segment at Asn542–Ala638 is COX2-like.

It belongs to the NosZ family. The protein in the C-terminal section; belongs to the cytochrome c oxidase subunit 2 family. Homodimer. The cofactor is Ca(2+). Cu cation serves as cofactor. In terms of processing, predicted to be exported by the Tat system. The position of the signal peptide cleavage has not been experimentally proven. Post-translationally, the N-terminus is blocked.

It localises to the periplasm. It catalyses the reaction N2 + 2 Fe(III)-[cytochrome c] + H2O = nitrous oxide + 2 Fe(II)-[cytochrome c] + 2 H(+). It participates in nitrogen metabolism; nitrate reduction (denitrification); dinitrogen from nitrate: step 4/4. Functionally, nitrous-oxide reductase is part of a bacterial respiratory system which is activated under anaerobic conditions in the presence of nitrate or nitrous oxide. In Stutzerimonas stutzeri (Pseudomonas stutzeri), this protein is Nitrous-oxide reductase (nosZ).